The primary structure comprises 311 residues: D-alanine--D-alanine ligase (311 aa).

The region spanning 106–301 (KLLWRGAELP…FDELCWRILL (196 aa)) is the ATP-grasp domain. Position 132–187 (132–187 (IGSVGLPLMIKPAHEGSSIGMAKVERPEELEAARAEAARYDDLVLAERWIEGGEYT)) interacts with ATP. 3 residues coordinate Mg(2+): D255, E268, and N270.

The protein belongs to the D-alanine--D-alanine ligase family. It depends on Mg(2+) as a cofactor. Mn(2+) is required as a cofactor.

Its subcellular location is the cytoplasm. It carries out the reaction 2 D-alanine + ATP = D-alanyl-D-alanine + ADP + phosphate + H(+). It participates in cell wall biogenesis; peptidoglycan biosynthesis. Functionally, cell wall formation. The protein is D-alanine--D-alanine ligase of Alkalilimnicola ehrlichii (strain ATCC BAA-1101 / DSM 17681 / MLHE-1).